Here is a 411-residue protein sequence, read N- to C-terminus: MTTPADDQGKSPENPWPVRAVATRVAKYIDRLGMVWIEGQLTELKIRQTTAWMVLRDPAADMSLSVSCPRDLVANAPVPLSEGTQVIVLGKPQFYTRNGSFSLRISEIRAVGIGELLARIDRLRRLLDAEGLFDPRLKRPIPFLPGTIGLITGRASHAERDVMTVAANRWPAVRFAVRNPIVQGPNAVPQIVGALRELDRDPGVDVIVLARGGGSVEDLLPFSDETLCREIASCTTPVVSAVGHEPDNPLCDLVADLRAATPTDAAKRVVPDAAAEQAFVTDLRRRSARALRQWVHREQHHLDQLRSRPVLARPLQAIDARADEVHRAVAAARRDVRRMVTVESERVGHLSARLTALGPAATLARGYAVVQTMPDTNVLRTTADAPAGTRLRIRVADGAITAVSEGTDEAH.

Belongs to the XseA family. In terms of assembly, heterooligomer composed of large and small subunits.

It is found in the cytoplasm. It catalyses the reaction Exonucleolytic cleavage in either 5'- to 3'- or 3'- to 5'-direction to yield nucleoside 5'-phosphates.. In terms of biological role, bidirectionally degrades single-stranded DNA into large acid-insoluble oligonucleotides, which are then degraded further into small acid-soluble oligonucleotides. The chain is Exodeoxyribonuclease 7 large subunit from Mycobacterium sp. (strain JLS).